Consider the following 190-residue polypeptide: Pyridoxal 5'-phosphate synthase subunit PdxT (190 aa).

Residue 46 to 48 (GES) participates in L-glutamine binding. C78 functions as the Nucleophile in the catalytic mechanism. Residues R105 and 134–135 (IR) each bind L-glutamine. Residues H170 and E172 each act as charge relay system in the active site.

This sequence belongs to the glutaminase PdxT/SNO family. In terms of assembly, in the presence of PdxS, forms a dodecamer of heterodimers. Only shows activity in the heterodimer.

It carries out the reaction aldehydo-D-ribose 5-phosphate + D-glyceraldehyde 3-phosphate + L-glutamine = pyridoxal 5'-phosphate + L-glutamate + phosphate + 3 H2O + H(+). The catalysed reaction is L-glutamine + H2O = L-glutamate + NH4(+). Its pathway is cofactor biosynthesis; pyridoxal 5'-phosphate biosynthesis. In terms of biological role, catalyzes the hydrolysis of glutamine to glutamate and ammonia as part of the biosynthesis of pyridoxal 5'-phosphate. The resulting ammonia molecule is channeled to the active site of PdxS. The sequence is that of Pyridoxal 5'-phosphate synthase subunit PdxT from Clostridium beijerinckii (strain ATCC 51743 / NCIMB 8052) (Clostridium acetobutylicum).